Here is a 665-residue protein sequence, read N- to C-terminus: DNA ligase (665 aa).

NAD(+)-binding positions include 32 to 36 (DSEYD), 81 to 82 (SL), and Glu110. Lys112 acts as the N6-AMP-lysine intermediate in catalysis. NAD(+)-binding residues include Arg133, Glu167, Lys283, and Lys307. Residues Cys401, Cys404, Cys419, and Cys424 each contribute to the Zn(2+) site. A BRCT domain is found at 586 to 665 (EGHPDFSGKT…AAFIEKQNGI (80 aa)).

This sequence belongs to the NAD-dependent DNA ligase family. LigA subfamily. Requires Mg(2+) as cofactor. The cofactor is Mn(2+).

It carries out the reaction NAD(+) + (deoxyribonucleotide)n-3'-hydroxyl + 5'-phospho-(deoxyribonucleotide)m = (deoxyribonucleotide)n+m + AMP + beta-nicotinamide D-nucleotide.. DNA ligase that catalyzes the formation of phosphodiester linkages between 5'-phosphoryl and 3'-hydroxyl groups in double-stranded DNA using NAD as a coenzyme and as the energy source for the reaction. It is essential for DNA replication and repair of damaged DNA. This is DNA ligase from Staphylococcus epidermidis (strain ATCC 12228 / FDA PCI 1200).